A 209-amino-acid chain; its full sequence is rRNA N(6)-adenosine-methyltransferase METTL5 (209 aa).

S-adenosyl-L-methionine-binding positions include Q28, T31, G59, C62, V64, D81, and 108–109 (DV).

This sequence belongs to the methyltransferase superfamily. PrmA family. As to quaternary structure, heterodimer; heterodimerizes with TRMT112. As to expression, expressed from very early development (8 post-conceptual weeks) and expression persists through adulthood in multiple substructures of the brain, including the cerebellar cortex, hippocampus, and striatum.

The protein resides in the nucleus. It is found in the presynapse. The protein localises to the postsynapse. The enzyme catalyses adenosine(1832) in 18S rRNA + S-adenosyl-L-methionine = N(6)-methyladenosine(1832) in 18S rRNA + S-adenosyl-L-homocysteine + H(+). RRNA N6-adenosine-methyltransferase activity is inhibited by zinc. Functionally, catalytic subunit of a heterodimer with TRMT112, which specifically methylates the 6th position of adenine in position 1832 of 18S rRNA. N6-methylation of adenine(1832) in 18S rRNA resides in the decoding center of 18S rRNA and is required for translation and embryonic stem cells (ESCs) pluripotency and differentiation. The protein is rRNA N(6)-adenosine-methyltransferase METTL5 of Homo sapiens (Human).